We begin with the raw amino-acid sequence, 700 residues long: Methionine--tRNA ligase (700 aa).

The short motif at 14 to 24 is the 'HIGH' region element; sequence PYANGPVHLGH. Residues C146, C149, C159, and C162 each coordinate Zn(2+). Residues 343-347 carry the 'KMSKS' region motif; sequence KFSKS. K346 serves as a coordination point for ATP. A tRNA-binding domain is found at 599–700; the sequence is EFEKIDLRVA…GDSIVGKPVK (102 aa).

The protein belongs to the class-I aminoacyl-tRNA synthetase family. MetG type 1 subfamily. Homodimer. It depends on Zn(2+) as a cofactor.

The protein resides in the cytoplasm. The catalysed reaction is tRNA(Met) + L-methionine + ATP = L-methionyl-tRNA(Met) + AMP + diphosphate. Is required not only for elongation of protein synthesis but also for the initiation of all mRNA translation through initiator tRNA(fMet) aminoacylation. The chain is Methionine--tRNA ligase from Chloroherpeton thalassium (strain ATCC 35110 / GB-78).